The primary structure comprises 359 residues: Protein-glutamate methylesterase/protein-glutamine glutaminase 2 (359 aa).

The Response regulatory domain occupies 6 to 123; the sequence is KVMIVDDSAL…KSFLEDASND (118 aa). Asp-57 bears the 4-aspartylphosphate mark. Residues 167 to 359 form the CheB-type methylesterase domain; it reads ERTTDQLVAI…GAIVGYGKSC (193 aa). Catalysis depends on residues Ser-179, His-205, and Asp-301.

The protein belongs to the CheB family. Post-translationally, phosphorylated by CheA. Phosphorylation of the N-terminal regulatory domain activates the methylesterase activity.

The protein resides in the cytoplasm. The catalysed reaction is [protein]-L-glutamate 5-O-methyl ester + H2O = L-glutamyl-[protein] + methanol + H(+). The enzyme catalyses L-glutaminyl-[protein] + H2O = L-glutamyl-[protein] + NH4(+). Involved in chemotaxis. Part of a chemotaxis signal transduction system that modulates chemotaxis in response to various stimuli. Catalyzes the demethylation of specific methylglutamate residues introduced into the chemoreceptors (methyl-accepting chemotaxis proteins or MCP) by CheR. Also mediates the irreversible deamidation of specific glutamine residues to glutamic acid. The protein is Protein-glutamate methylesterase/protein-glutamine glutaminase 2 of Dechloromonas aromatica (strain RCB).